The sequence spans 1584 residues: MSSVKVAVRVRPFNQREISNTSKCVLQVNGNTTTINGHSINKENFSFNFDHSYWSFARNDPHFITQKQVYEELGVEMLEHAFEGYNVCIFAYGQTGSGKSYTMMGKANDPDEMGIIPRLCNDLFARIDNNNDKDVQYSVEVSYMEIYCERVKDLLNPNSGGNLRVREHPLLGPYVDDLTKMAVCSYHDICNLMDEGNKARTVAATNMNSTSSRSHAVFTIVLTQKRHCADSNLDTEKHSKISLVDLAGSERANSTGAEGQRLKEGANINKSLTTLGLVISKLAEESTKKKKSNKGVIPYRDSVLTWLLRENLGGNSKTAMLAALSPADINFDETLSTLRYADRAKQIVCQAVVNEDPNAKLIRELNEEVIKLRHILKDKGIDVTDVQETPGKHKKGPKLPAHVHEQLEKLQESEKLMAEIGKTWEQKLIHTEEIRKQREEELRDMGLACAEDGTTLGVFSPKKLPHLVNLNEDPLMSECLIYYLKEGVTSVGRPEAEHRPDILLSGEAILELHCEFINEDGNVTLTMKPNASCYINGKQVTTPTVLHTGSRVILGEHHVFRYNDPQEARQSRHNLAAIAEQPIDWKYAQQELLDKQGIDLKADMEKKMLEMESQYRREKVELEQKMYHQTREYESMIENLQKQVDLAQSYISGGGSIWEGERMLTSSLLEFPEELKWTSDQKRVVLKAAIKWRYHQFTSVRDDLWGNAIFVKEANAISVELKKKVQFQFALLTDTMYSPLPPDLLPPGEDLTLRPYPKTVVAIQVQDLKNGATHYWSIEKLKQRLEAMRDMYETDAEMSPADGDPMMDALMGTDPFYDRFPWFRMVGRAFVYLNNLLHNVPLIHKVAVVNEKGEVKGYLKVAIEPVQKDEVINQKKGVRQTAKLHFRKEDFLKSHKNGETSDSDALAFPEHMQEEVEFCFRVVVLQAIDVADTYSDVFCQFNFLHRHDEAFSTEPMKNSKSPLTFEHTQNLHIKMSKTFLHYLHHFPIIFEVFGHFQPKSEQFNFERQNSALGRRLSTKLTFQQPSLVISTPVKSKKANAPIQNNNASVKSKHDLLVWFEICELANNGEYVPTIVDHAQGLPTHGIFLLHQGIQRRIKITICHEKGELKWKDCQELVVGRIRAGPEWAGGDDVDVLSLGLFPGTFMEFSMDDRTFFQFEAAWDSSLHNSPLLNRVSNYGDQIYMTLSAYMELDGCAQPAVVTKDLCLLIYARDSKISAASRFCRSLVGGISKSPEMNRVPGVYQLCLKDGSDSGSPGAIRRQRRVLDTSSAYVRGEENLGQWRPRGDSLIFEHQWELEKLTRLQQVERVRLFLRLRDRLKGKKNKGEARTPVSPCDPVCAIPESIKLDEKDKGIVGKVLGLIRRKIPMNKDPPTGNKAQELSDESGSNSITSPVSDKSLIKSSRSSDLLCRQKSKSDQNLASNDDIVDNLGGMKRSLSGSRILQLNILVPEVLEERVGVVVSKKGYMNFLEEKTQGWTRRWVIVRRPYILLFRDDRDLVIRGIINLANARIEHSEDQQAMVKVPNTFSVCTNQRGFLMQMMPGDEMYDWLYAINPLMAGQMKLHGNQNGTTLKSPTSSSSIAAS.

Residues 3–347 form the Kinesin motor domain; it reads SVKVAVRVRP…LRYADRAKQI (345 aa). ATP is bound at residue 93–100; it reads GQTGSGKS. The interval 183 to 335 is microtubule-binding; it reads VCSYHDICNL…PADINFDETL (153 aa). Coiled-coil stretches lie at residues 425-445, 598-652, and 777-797; these read EQKL…LRDM, IDLK…SYIS, and SIEK…TDAE. Positions 1366–1416 are disordered; that stretch reads IPMNKDPPTGNKAQELSDESGSNSITSPVSDKSLIKSSRSSDLLCRQKSKS. A compositionally biased stretch (polar residues) spans 1376–1394; it reads NKAQELSDESGSNSITSPV. Residues 1395–1409 show a composition bias toward low complexity; sequence SDKSLIKSSRSSDLL. Residues 1460–1558 form the PH domain; that stretch reads VVSKKGYMNF…WLYAINPLMA (99 aa).

It belongs to the TRAFAC class myosin-kinesin ATPase superfamily. Kinesin family. Unc-104 subfamily. In terms of assembly, interacts with casy-1. As to expression, expressed in nerve ring, amphid commissure and ventral nerve cord (at protein level).

The protein localises to the cytoplasm. It is found in the cytoskeleton. The protein resides in the cell projection. Its subcellular location is the axon. In terms of biological role, motor protein involved in microtubule-associated anterograde transport. Regulates the transport of synaptic vesicle precursors in the axon of DA motor neurons. Regulates the polarized sorting of axonal proteins. Essential for the transport of synaptic components during the synaptic remodeling of the DD motor neuron, probably downstream of cdk-5 and/or pct-1/cyy-1 complex. Required for the anterograde transport of neuropeptide-containing dense core vesicles along axons. Involved in necrotic cell death. This is Kinesin-like protein unc-104 (unc-104) from Caenorhabditis elegans.